Reading from the N-terminus, the 828-residue chain is Periplasmic nitrate reductase (828 aa).

Residues 1–31 (MKLSRRSFMKANAVAAAAAAAGLSVPGVARA) constitute a signal peptide (tat-type signal). Residues 39–95 (IKWDKAPCRFCGTGCGVLVGTQQGRVVACQGDPDAPVNRGLNCIKGYFLPKIMYGKD) enclose the 4Fe-4S Mo/W bis-MGD-type domain. The [4Fe-4S] cluster site is built by Cys46, Cys49, Cys53, and Cys81. Residues Lys83, Gln150, Asn175, Cys179, 212 to 219 (WGSNMAEM), 243 to 247 (STYQH), 262 to 264 (QSD), Met372, Gln376, Asn482, 508 to 509 (SD), Lys531, Asp558, and 718 to 727 (TGRVLEHWHT) contribute to the Mo-bis(molybdopterin guanine dinucleotide) site. Phe794 lines the substrate pocket. Mo-bis(molybdopterin guanine dinucleotide)-binding residues include Asn802 and Lys819.

Belongs to the prokaryotic molybdopterin-containing oxidoreductase family. NasA/NapA/NarB subfamily. Component of the periplasmic nitrate reductase NapAB complex composed of NapA and NapB. [4Fe-4S] cluster serves as cofactor. Mo-bis(molybdopterin guanine dinucleotide) is required as a cofactor. In terms of processing, predicted to be exported by the Tat system. The position of the signal peptide cleavage has not been experimentally proven.

It localises to the periplasm. It catalyses the reaction 2 Fe(II)-[cytochrome] + nitrate + 2 H(+) = 2 Fe(III)-[cytochrome] + nitrite + H2O. Catalytic subunit of the periplasmic nitrate reductase complex NapAB. Receives electrons from NapB and catalyzes the reduction of nitrate to nitrite. The protein is Periplasmic nitrate reductase of Escherichia coli O1:K1 / APEC.